The sequence spans 222 residues: UPF0758 protein YE0063 (222 aa).

The 123-residue stretch at 100 to 222 (VLQNPEITQK…CVSFAERGWL (123 aa)) folds into the MPN domain. Zn(2+)-binding residues include H171, H173, and D184. The JAMM motif signature appears at 171–184 (HNHPSGKAEPSQAD).

The protein belongs to the UPF0758 family. YicR subfamily.

The protein is UPF0758 protein YE0063 of Yersinia enterocolitica serotype O:8 / biotype 1B (strain NCTC 13174 / 8081).